A 122-amino-acid chain; its full sequence is Large ribosomal subunit protein uL14 (122 aa).

It belongs to the universal ribosomal protein uL14 family. Part of the 50S ribosomal subunit. Forms a cluster with proteins L3 and L19. In the 70S ribosome, L14 and L19 interact and together make contacts with the 16S rRNA in bridges B5 and B8.

Its function is as follows. Binds to 23S rRNA. Forms part of two intersubunit bridges in the 70S ribosome. The polypeptide is Large ribosomal subunit protein uL14 (Citrifermentans bemidjiense (strain ATCC BAA-1014 / DSM 16622 / JCM 12645 / Bem) (Geobacter bemidjiensis)).